A 158-amino-acid polypeptide reads, in one-letter code: NADH-quinone oxidoreductase subunit B 1 (158 aa).

[4Fe-4S] cluster-binding residues include Cys37, Cys38, Cys102, and Cys132.

This sequence belongs to the complex I 20 kDa subunit family. As to quaternary structure, NDH-1 is composed of 14 different subunits. Subunits NuoB, C, D, E, F, and G constitute the peripheral sector of the complex. [4Fe-4S] cluster serves as cofactor.

It is found in the cell inner membrane. It catalyses the reaction a quinone + NADH + 5 H(+)(in) = a quinol + NAD(+) + 4 H(+)(out). NDH-1 shuttles electrons from NADH, via FMN and iron-sulfur (Fe-S) centers, to quinones in the respiratory chain. Couples the redox reaction to proton translocation (for every two electrons transferred, four hydrogen ions are translocated across the cytoplasmic membrane), and thus conserves the redox energy in a proton gradient. In Chromobacterium violaceum (strain ATCC 12472 / DSM 30191 / JCM 1249 / CCUG 213 / NBRC 12614 / NCIMB 9131 / NCTC 9757 / MK), this protein is NADH-quinone oxidoreductase subunit B 1.